Reading from the N-terminus, the 1380-residue chain is MSSSVTSKYVLNSFSSVPRLSYAKSIDIKDSLTDLIKIQRDSYNAFIGIDQDVDSGIKNIFQSMFPIQDLLGRAVLQFVSYSIGEPQYDEYECIKRGITYSVPIRIVLRFIVWKVQEVSFKEVKYVVDEETSEKSIKYIKEQEVSIGDLPTMTSYGTFIINGVERVIVSQMHRSPGVFFDSDKGKTYSSGKLIYLARIIPYRGSWLDFEFDIKDILYFRIDRKRKLPVSLLLRALGLSNSEILDTFYDKIRYERCENGWVVPFVVDRFRGVRLSYDLVDIDGNVLVKANTRITLRLAKKLASDGLKKYLVPFAEIQGLFIANDLVDPASNVMIMCAGESITSEHINKLKLFDINEIFILNIDFLTVGPYILNTLFLDKNISYEDALFEIYKVLRSGESPSLDTMKAFFDGLFFEKERYDLSTVGRIKLNDHLGLDISEDVTVLTKDDIIHVIKKLVLLRDGEGFVDDIDHLGNRRVRSVGEFIENQFRIGILRLERMIMDYMSSVNFDNAMPCDFVNPKVLATVLKDFFSSSQLSQFMDQTNPLSEVTHKRRLSALGPGGLTRERAGFEVRDVHPTHYGRICPIETPEGQNIGLISSLAIYARINKHGFIESPYRKVDNGVVTDKVEYLLAMQESNYYIADASATLDENNRFVDDMLYCRHDGNFVMVKREQVDYIDVSPKQIVSVAASLIPFLENNDANRALMGSNMQRQAVPLLKADAPLVGTGMESIVAAGSGTVVLAKRSGIVHRVDGLYIVIRAFDKEKNEYLGVDIYNLRKFQRSNHNTCINQKPLVKPGDYVRENDVIADGSAIDQGELALGKNVLVAFMSWQGYNFEDSIVISSEVVKKDVFTSIHIEEFECVVRDTALGPEKIMRSIPDVNEDSLSHLDDVGIVNVGAEVSAGDILVGKVTPRPPVSLPPETKLLVTIFGEKVFDCVDSSLYLPIDVEGTVVDVHVFVRRGVEENDRSLLIKQNEINGFIKERDYEIDVVSEYFYDELKRVLVNTNTEYNNQNIEDYLKSIPQKSWWDIKLSDESVLSQISDLKEKFDSMIENAHSKFDQKIDKLNYGYDLPQGVLCIVKVFVAVKHNLQPGDKMAGRHGNKGVISRIVPVEDMPYLEDGTPVDIILNSLGVPSRMNVGQILETHLGWASVNLGKKIGNILDNIDELTIAHLRNFLDQVYDGQDLKYSIRSMSDDDLLAFAERLRDGVPMAAPVFEGPKDNQISNLLKLADLDVSGQVDLYDGRIGEKFDRKVTVGYIYMLKLHHLVDDKIHARSVGPYGLVTQQPLGGKSHFGGQRFGEMECWALQAYGAAYTLQEMLTVKSDDIVGRVKIYESIIKGDSNFECGIPESFNVMVKELRSLCLDVALKQDKDFLHDRKINN.

It belongs to the RNA polymerase beta chain family. In terms of assembly, the RNAP catalytic core consists of 2 alpha, 1 beta, 1 beta' and 1 omega subunit. When a sigma factor is associated with the core the holoenzyme is formed, which can initiate transcription.

It catalyses the reaction RNA(n) + a ribonucleoside 5'-triphosphate = RNA(n+1) + diphosphate. Functionally, DNA-dependent RNA polymerase catalyzes the transcription of DNA into RNA using the four ribonucleoside triphosphates as substrates. The protein is DNA-directed RNA polymerase subunit beta of Ehrlichia ruminantium (strain Welgevonden).